Here is a 121-residue protein sequence, read N- to C-terminus: MSISQDDILNAVAEMSVIQVVELIKAFEEKFGVTAAAGSAGPAAAAAVVEEQTEFNVMLLEAGEKKVNVIKAVRELTGLGLKEAKAVVDGAPGIVLEAVAKDAADKAKATLEEAGAKVELK.

This sequence belongs to the bacterial ribosomal protein bL12 family. Homodimer. Part of the ribosomal stalk of the 50S ribosomal subunit. Forms a multimeric L10(L12)X complex, where L10 forms an elongated spine to which 2 to 4 L12 dimers bind in a sequential fashion. Binds GTP-bound translation factors.

In terms of biological role, forms part of the ribosomal stalk which helps the ribosome interact with GTP-bound translation factors. Is thus essential for accurate translation. The polypeptide is Large ribosomal subunit protein bL12 (Pseudomonas syringae pv. tomato (strain ATCC BAA-871 / DC3000)).